We begin with the raw amino-acid sequence, 915 residues long: Metabotropic glutamate receptor 7 (915 aa).

The signal sequence occupies residues 1 to 34 (MVQLRKLLRVLTLMKFPCCVLEVLLCALAAAARG). The Extracellular portion of the chain corresponds to 35–590 (QEMYAPHSIR…IIKLEWHSPW (556 aa)). C67 and C109 form a disulfide bridge. Residue N98 is glycosylated (N-linked (GlcNAc...) asparagine). L-glutamate is bound by residues S159, 180 to 182 (AST), Y230, and D314. Intrachain disulfides connect C249–C541, C374–C390, C430–C437, C523–C542, C527–C545, C548–C560, and C563–C576. K407 lines the L-glutamate pocket. N458 and N486 each carry an N-linked (GlcNAc...) asparagine glycan. N-linked (GlcNAc...) asparagine glycosylation occurs at N572. A helical membrane pass occupies residues 591 to 615 (AVIPVFLAMLGIIATIFVMATFIRY). The Cytoplasmic portion of the chain corresponds to 616 to 627 (NDTPIVRASGRE). A helical membrane pass occupies residues 628–648 (LSYVLLTGIFLCYIITFLMIA). The Extracellular segment spans residues 649 to 654 (KPDVAV). A helical transmembrane segment spans residues 655 to 675 (CSFRRVFLGLGMCISYAALLT). Topologically, residues 676–702 (KTNRIYRIFEQGKKSVTAPRLISPTSQ) are cytoplasmic. Residues 703 to 723 (LAITSSLISVQLLGVFIWFGV) form a helical membrane-spanning segment. The Extracellular portion of the chain corresponds to 724–753 (DPPNIIIDYDEHKTMNPEQARGVLKCDITD). Residues 754–775 (LQIICSLGYSILLMVTCTVYAI) form a helical membrane-spanning segment. The Cytoplasmic portion of the chain corresponds to 776-788 (KTRGVPENFNEAK). The chain crosses the membrane as a helical span at residues 789 to 810 (PIGFTMYTTCIVWLAFIPIFFG). The Extracellular segment spans residues 811–825 (TAQSAEKLYIQTTTL). Residues 826–850 (TISMNLSASVALGMLYMPKVYIIIF) form a helical membrane-spanning segment. The Cytoplasmic segment spans residues 851-915 (HPELNVQKRK…KYVSYNNLVI (65 aa)). Residues 874–895 (SRLSHKPSDRPNGEAKTELCEN) form a disordered region. A compositionally biased stretch (basic and acidic residues) spans 879-892 (KPSDRPNGEAKTEL). The residue at position 900 (S900) is a Phosphoserine.

This sequence belongs to the G-protein coupled receptor 3 family. Homodimer. Interacts with PICK1. N-glycosylated. Expressed in many areas of the brain, especially in the cerebral cortex, hippocampus, and cerebellum. Expression of GRM7 isoforms in non-neuronal tissues appears to be restricted to isoform 3 and isoform 4.

Its subcellular location is the cell membrane. In terms of biological role, G-protein coupled receptor activated by glutamate that regulates axon outgrowth through the MAPK-cAMP-PKA signaling pathway during neuronal development. Ligand binding causes a conformation change that triggers signaling via guanine nucleotide-binding proteins (G proteins) and modulates the activity of downstream effectors, such as adenylate cyclase that it inhibits. This Homo sapiens (Human) protein is Metabotropic glutamate receptor 7 (GRM7).